A 1036-amino-acid chain; its full sequence is Phospholipase D1 (1036 aa).

The PX domain occupies 81-212 (IKAQVLEVER…TEFLDVSQLS (132 aa)). The 110-residue stretch at 219-328 (PKGLEGMIMK…WGGAIEEFIQ (110 aa)) folds into the PH domain. Residues C240 and C241 are each lipidated (S-palmitoyl cysteine). A PLD phosphodiesterase 1 domain is found at 459-486 (YLWAHHEKLVIIDQSVAFVGGIDLAYGR). The tract at residues 463 to 890 (HHEKLVIIDQ…MLGKRDSEMA (428 aa)) is catalytic. Phosphoserine is present on residues S499, S561, and S591. One can recognise a PLD phosphodiesterase 2 domain in the interval 853-880 (ELIYVHSKLLIADDNTVIIGSANINDRS).

The protein belongs to the phospholipase D family. In terms of assembly, interacts with PIP5K1B.

It is found in the cytoplasm. The protein localises to the perinuclear region. Its subcellular location is the endoplasmic reticulum membrane. It localises to the golgi apparatus membrane. The protein resides in the late endosome membrane. It catalyses the reaction a 1,2-diacyl-sn-glycero-3-phosphocholine + H2O = a 1,2-diacyl-sn-glycero-3-phosphate + choline + H(+). With respect to regulation, stimulated by phosphatidylinositol 4,5-bisphosphate and phosphatidylinositol 3,4,5-trisphosphate, activated by the phosphokinase C-alpha, by the ADP-ribosylation factor-1 (ARF-1), and to a lesser extent by GTP-binding proteins: RHO A, RAC-1 and CDC42. Its function is as follows. Implicated as a critical step in numerous cellular pathways, including signal transduction, membrane trafficking, and the regulation of mitosis. May be involved in the regulation of perinuclear intravesicular membrane traffic. The chain is Phospholipase D1 (PLD1) from Cricetulus griseus (Chinese hamster).